A 360-amino-acid chain; its full sequence is Peptide chain release factor 1 (360 aa).

Gln235 carries the post-translational modification N5-methylglutamine.

Belongs to the prokaryotic/mitochondrial release factor family. In terms of processing, methylated by PrmC. Methylation increases the termination efficiency of RF1.

It localises to the cytoplasm. Its function is as follows. Peptide chain release factor 1 directs the termination of translation in response to the peptide chain termination codons UAG and UAA. The polypeptide is Peptide chain release factor 1 (Burkholderia vietnamiensis (strain G4 / LMG 22486) (Burkholderia cepacia (strain R1808))).